The chain runs to 206 residues: Thiamine-phosphate synthase (206 aa).

Residues 37-41 (QYRNK) and N69 contribute to the 4-amino-2-methyl-5-(diphosphooxymethyl)pyrimidine site. Mg(2+) contacts are provided by D70 and D89. A 4-amino-2-methyl-5-(diphosphooxymethyl)pyrimidine-binding site is contributed by S108. 135–137 (SST) serves as a coordination point for 2-[(2R,5Z)-2-carboxy-4-methylthiazol-5(2H)-ylidene]ethyl phosphate. K138 provides a ligand contact to 4-amino-2-methyl-5-(diphosphooxymethyl)pyrimidine. 2-[(2R,5Z)-2-carboxy-4-methylthiazol-5(2H)-ylidene]ethyl phosphate contacts are provided by residues G165 and 185–186 (IS).

This sequence belongs to the thiamine-phosphate synthase family. Mg(2+) serves as cofactor.

It carries out the reaction 2-[(2R,5Z)-2-carboxy-4-methylthiazol-5(2H)-ylidene]ethyl phosphate + 4-amino-2-methyl-5-(diphosphooxymethyl)pyrimidine + 2 H(+) = thiamine phosphate + CO2 + diphosphate. It catalyses the reaction 2-(2-carboxy-4-methylthiazol-5-yl)ethyl phosphate + 4-amino-2-methyl-5-(diphosphooxymethyl)pyrimidine + 2 H(+) = thiamine phosphate + CO2 + diphosphate. The enzyme catalyses 4-methyl-5-(2-phosphooxyethyl)-thiazole + 4-amino-2-methyl-5-(diphosphooxymethyl)pyrimidine + H(+) = thiamine phosphate + diphosphate. It functions in the pathway cofactor biosynthesis; thiamine diphosphate biosynthesis; thiamine phosphate from 4-amino-2-methyl-5-diphosphomethylpyrimidine and 4-methyl-5-(2-phosphoethyl)-thiazole: step 1/1. In terms of biological role, condenses 4-methyl-5-(beta-hydroxyethyl)thiazole monophosphate (THZ-P) and 2-methyl-4-amino-5-hydroxymethyl pyrimidine pyrophosphate (HMP-PP) to form thiamine monophosphate (TMP). This Azoarcus sp. (strain BH72) protein is Thiamine-phosphate synthase.